We begin with the raw amino-acid sequence, 573 residues long: Septation ring formation regulator EzrA (573 aa).

The Extracellular portion of the chain corresponds to 1–2 (MQ). Residues 3-21 (VAIGIVVVAIVIYAAVKGF) traverse the membrane as a helical segment. The Cytoplasmic segment spans residues 22–573 (QFYIDKQVRQ…KQADKMNDEA (552 aa)). Coiled coils occupy residues 100–188 (DAQQ…LAKA), 317–364 (LTHA…VYQA), and 416–488 (ETLQ…TLKE).

This sequence belongs to the EzrA family.

The protein resides in the cell membrane. Negative regulator of FtsZ ring formation; modulates the frequency and position of FtsZ ring formation. Inhibits FtsZ ring formation at polar sites. Interacts either with FtsZ or with one of its binding partners to promote depolymerization. This Lactiplantibacillus plantarum (strain ATCC BAA-793 / NCIMB 8826 / WCFS1) (Lactobacillus plantarum) protein is Septation ring formation regulator EzrA.